Here is a 158-residue protein sequence, read N- to C-terminus: GTP-dependent dephospho-CoA kinase (158 aa).

GTP-binding residues include D35, I36, V37, D54, K56, E109, and D132.

This sequence belongs to the GTP-dependent DPCK family.

It carries out the reaction 3'-dephospho-CoA + GTP = GDP + CoA + H(+). The protein operates within cofactor biosynthesis; coenzyme A biosynthesis. Catalyzes the GTP-dependent phosphorylation of the 3'-hydroxyl group of dephosphocoenzyme A to form coenzyme A (CoA). The sequence is that of GTP-dependent dephospho-CoA kinase from Methanocaldococcus jannaschii (strain ATCC 43067 / DSM 2661 / JAL-1 / JCM 10045 / NBRC 100440) (Methanococcus jannaschii).